The primary structure comprises 338 residues: Gibberellin 2-beta-dioxygenase 8 (338 aa).

The Fe2OG dioxygenase domain occupies Asn-191 to Pro-290. 3 residues coordinate Fe cation: His-215, Asp-217, and His-271. Arg-281 is a catalytic residue. Residue Arg-281 coordinates 2-oxoglutarate.

The protein belongs to the iron/ascorbate-dependent oxidoreductase family. GA2OX subfamily. It depends on Fe(2+) as a cofactor.

The catalysed reaction is gibberellin A1 + 2-oxoglutarate + O2 = gibberellin A8 + succinate + CO2. It participates in plant hormone biosynthesis; gibberellin biosynthesis. In terms of biological role, catalyzes the 2-beta-hydroxylation of gibberellins (GA) precursors, rendering them unable to be converted to active GAs. Hydroxylates the C20-GA GA12 and GA53, but is not active on C19-GAs, like GA1, GA4, GA9 and GA20. This is Gibberellin 2-beta-dioxygenase 8 (GA2OX8) from Arabidopsis thaliana (Mouse-ear cress).